Consider the following 108-residue polypeptide: Sperm-egg fusion protein LLCFC1 (108 aa).

An N-terminal signal peptide occupies residues 1-30 (MTSLGSQLHRATFLTALLLLLLLQVKGVKT). The segment covering 39–49 (GDKSQKDKVSS) has biased composition (basic and acidic residues). Residues 39-64 (GDKSQKDKVSSEDQGEEEYEEHFEAS) form a disordered region.

In terms of tissue distribution, detected in testicular germ cells and spermatozoa (at protein level). Abundantly expressed in testis.

The protein localises to the secreted. Functionally, sperm protein required for fusion of sperm with the egg membrane during fertilization. In Mus musculus (Mouse), this protein is Sperm-egg fusion protein LLCFC1.